Here is a 298-residue protein sequence, read N- to C-terminus: Protease HtpX homolog (298 aa).

A run of 2 helical transmembrane segments spans residues 14 to 34 (ILVM…IGYL) and 39 to 59 (VIGG…VIIG). His-144 provides a ligand contact to Zn(2+). The active site involves Glu-145. His-148 provides a ligand contact to Zn(2+). 2 consecutive transmembrane segments (helical) span residues 159–179 (IALA…NFWW) and 195–215 (IFAI…ATIA). Residue Glu-224 coordinates Zn(2+).

It belongs to the peptidase M48B family. The cofactor is Zn(2+).

The protein resides in the cell membrane. The polypeptide is Protease HtpX homolog (Limosilactobacillus reuteri (strain DSM 20016) (Lactobacillus reuteri)).